A 387-amino-acid polypeptide reads, in one-letter code: S-adenosylmethionine synthase (387 aa).

Residue His16 coordinates ATP. Asp18 is a binding site for Mg(2+). Residue Glu44 coordinates K(+). L-methionine contacts are provided by Glu57 and Gln100. Residues Gln100–Glu110 form a flexible loop region. ATP contacts are provided by residues Asp167–Lys169, Arg232–Phe233, Asp241, Arg247–Lys248, Ala264, and Lys268. Asp241 is a binding site for L-methionine. Lys272 serves as a coordination point for L-methionine.

The protein belongs to the AdoMet synthase family. In terms of assembly, homotetramer; dimer of dimers. The cofactor is Mg(2+). Requires K(+) as cofactor.

It is found in the cytoplasm. The catalysed reaction is L-methionine + ATP + H2O = S-adenosyl-L-methionine + phosphate + diphosphate. It participates in amino-acid biosynthesis; S-adenosyl-L-methionine biosynthesis; S-adenosyl-L-methionine from L-methionine: step 1/1. Functionally, catalyzes the formation of S-adenosylmethionine (AdoMet) from methionine and ATP. The overall synthetic reaction is composed of two sequential steps, AdoMet formation and the subsequent tripolyphosphate hydrolysis which occurs prior to release of AdoMet from the enzyme. The protein is S-adenosylmethionine synthase of Janthinobacterium sp. (strain Marseille) (Minibacterium massiliensis).